Reading from the N-terminus, the 264-residue chain is tRNA pseudouridine synthase A (264 aa).

The active-site Nucleophile is aspartate 51. Tyrosine 109 is a substrate binding site.

This sequence belongs to the tRNA pseudouridine synthase TruA family. In terms of assembly, homodimer.

It carries out the reaction uridine(38/39/40) in tRNA = pseudouridine(38/39/40) in tRNA. Functionally, formation of pseudouridine at positions 38, 39 and 40 in the anticodon stem and loop of transfer RNAs. The polypeptide is tRNA pseudouridine synthase A (Aromatoleum aromaticum (strain DSM 19018 / LMG 30748 / EbN1) (Azoarcus sp. (strain EbN1))).